The sequence spans 333 residues: 4-hydroxy-3-methylbut-2-enyl diphosphate reductase (333 aa).

Position 34 (Cys-34) interacts with [4Fe-4S] cluster. Residues His-63 and His-96 each coordinate (2E)-4-hydroxy-3-methylbut-2-enyl diphosphate. 2 residues coordinate dimethylallyl diphosphate: His-63 and His-96. Residues His-63 and His-96 each coordinate isopentenyl diphosphate. Residue Cys-118 participates in [4Fe-4S] cluster binding. His-146 lines the (2E)-4-hydroxy-3-methylbut-2-enyl diphosphate pocket. His-146 contacts dimethylallyl diphosphate. Residue His-146 participates in isopentenyl diphosphate binding. Glu-148 (proton donor) is an active-site residue. Thr-186 serves as a coordination point for (2E)-4-hydroxy-3-methylbut-2-enyl diphosphate. Cys-216 lines the [4Fe-4S] cluster pocket. (2E)-4-hydroxy-3-methylbut-2-enyl diphosphate-binding residues include Ser-244, Ser-245, Asn-246, and Ser-289. Dimethylallyl diphosphate-binding residues include Ser-244, Ser-245, Asn-246, and Ser-289. The isopentenyl diphosphate site is built by Ser-244, Ser-245, Asn-246, and Ser-289.

The protein belongs to the IspH family. [4Fe-4S] cluster is required as a cofactor.

The enzyme catalyses isopentenyl diphosphate + 2 oxidized [2Fe-2S]-[ferredoxin] + H2O = (2E)-4-hydroxy-3-methylbut-2-enyl diphosphate + 2 reduced [2Fe-2S]-[ferredoxin] + 2 H(+). The catalysed reaction is dimethylallyl diphosphate + 2 oxidized [2Fe-2S]-[ferredoxin] + H2O = (2E)-4-hydroxy-3-methylbut-2-enyl diphosphate + 2 reduced [2Fe-2S]-[ferredoxin] + 2 H(+). The protein operates within isoprenoid biosynthesis; dimethylallyl diphosphate biosynthesis; dimethylallyl diphosphate from (2E)-4-hydroxy-3-methylbutenyl diphosphate: step 1/1. It participates in isoprenoid biosynthesis; isopentenyl diphosphate biosynthesis via DXP pathway; isopentenyl diphosphate from 1-deoxy-D-xylulose 5-phosphate: step 6/6. In terms of biological role, catalyzes the conversion of 1-hydroxy-2-methyl-2-(E)-butenyl 4-diphosphate (HMBPP) into a mixture of isopentenyl diphosphate (IPP) and dimethylallyl diphosphate (DMAPP). Acts in the terminal step of the DOXP/MEP pathway for isoprenoid precursor biosynthesis. In Mycobacterium sp. (strain JLS), this protein is 4-hydroxy-3-methylbut-2-enyl diphosphate reductase.